We begin with the raw amino-acid sequence, 403 residues long: L-cysteine:1D-myo-inositol 2-amino-2-deoxy-alpha-D-glucopyranoside ligase (403 aa).

Position 43 (cysteine 43) interacts with Zn(2+). L-cysteinyl-5'-AMP contacts are provided by residues 43 to 46 (CGIT), threonine 58, 81 to 83 (NVT), and tryptophan 223. The 'HIGH' region signature appears at 45–55 (ITPYDATHLGH). A Zn(2+)-binding site is contributed by cysteine 227. L-cysteinyl-5'-AMP is bound at residue 245-247 (GAD). Zn(2+) is bound at residue histidine 252. Valine 278 contacts L-cysteinyl-5'-AMP. The short motif at 284-288 (KMSKS) is the 'KMSKS' region element.

It belongs to the class-I aminoacyl-tRNA synthetase family. MshC subfamily. As to quaternary structure, monomer. It depends on Zn(2+) as a cofactor.

The catalysed reaction is 1D-myo-inositol 2-amino-2-deoxy-alpha-D-glucopyranoside + L-cysteine + ATP = 1D-myo-inositol 2-(L-cysteinylamino)-2-deoxy-alpha-D-glucopyranoside + AMP + diphosphate + H(+). In terms of biological role, catalyzes the ATP-dependent condensation of GlcN-Ins and L-cysteine to form L-Cys-GlcN-Ins. The sequence is that of L-cysteine:1D-myo-inositol 2-amino-2-deoxy-alpha-D-glucopyranoside ligase from Acidothermus cellulolyticus (strain ATCC 43068 / DSM 8971 / 11B).